Consider the following 242-residue polypeptide: Mitochondrial intermembrane space import and assembly protein 40 (242 aa).

A mitochondrion-targeting transit peptide spans 1-18 (MFARSFSNASRTIARRSL). Residues 1-22 (MFARSFSNASRTIARRSLSTRS) show a composition bias toward polar residues. Residues 1–30 (MFARSFSNASRTIARRSLSTRSGPAPSSLW) are disordered. Residues 19–34 (STRSGPAPSSLWSSRN) lie on the Mitochondrial matrix side of the membrane. A helical; Signal-anchor for type II membrane protein membrane pass occupies residues 35–51 (AVIAGTTLAITALAVTS). Residues 52–242 (ERRKVFNESA…EETAAPAAAP (191 aa)) lie on the Mitochondrial intermembrane side of the membrane. The interval 58 to 111 (NESAQKATSPRDSIIAQDSLKENVHKKSVRQDEFSGESTKPEASTSSDSVEKAA) is disordered. Residues 59–68 (ESAQKATSPR) show a composition bias toward polar residues. The span at 76-90 (SLKENVHKKSVRQDE) shows a compositional bias: basic and acidic residues. Over residues 93 to 105 (GESTKPEASTSSD) the composition is skewed to polar residues. 3 disulfides stabilise this stretch: Cys144–Cys146, Cys155–Cys188, and Cys165–Cys178. The 45-residue stretch at 152-196 (TGPCGEQFKAAFSCFVYSEAEPKGVDCVELFKVMQDCFREHPEIY) folds into the CHCH domain. 2 short sequence motifs (cx9C motif) span residues 155–165 (CGEQFKAAFSC) and 178–188 (CVELFKVMQDC). A disordered region spans residues 215–242 (DEAPPQEGTMEEKVEAAKEETAAPAAAP). Basic and acidic residues predominate over residues 224–235 (MEEKVEAAKEET).

Monomer. It depends on Cu(2+) as a cofactor. Zn(2+) serves as cofactor.

The protein resides in the mitochondrion inner membrane. In terms of biological role, required for the import and folding of small cysteine-containing proteins (small Tim) in the mitochondrial intermembrane space (IMS). Forms a redox cycle with ERV1 that involves a disulfide relay system. Precursor proteins to be imported into the IMS are translocated in their reduced form into the mitochondria. The oxidized form of MIA40 forms a transient intermolecular disulfide bridge with the reduced precursor protein, resulting in oxidation of the precursor protein that now contains an intramolecular disulfide bond and is able to undergo folding in the IMS. The polypeptide is Mitochondrial intermembrane space import and assembly protein 40 (MIA40) (Cryptococcus neoformans var. neoformans serotype D (strain B-3501A) (Filobasidiella neoformans)).